A 117-amino-acid polypeptide reads, in one-letter code: Large ribosomal subunit protein uL18 (117 aa).

The protein belongs to the universal ribosomal protein uL18 family. In terms of assembly, part of the 50S ribosomal subunit; part of the 5S rRNA/L5/L18/L25 subcomplex. Contacts the 5S and 23S rRNAs.

In terms of biological role, this is one of the proteins that bind and probably mediate the attachment of the 5S RNA into the large ribosomal subunit, where it forms part of the central protuberance. This chain is Large ribosomal subunit protein uL18, found in Sodalis glossinidius (strain morsitans).